The following is a 179-amino-acid chain: Negative modulator of initiation of replication (179 aa).

This sequence belongs to the SeqA family. As to quaternary structure, homodimer. Polymerizes to form helical filaments.

It is found in the cytoplasm. Its function is as follows. Negative regulator of replication initiation, which contributes to regulation of DNA replication and ensures that replication initiation occurs exactly once per chromosome per cell cycle. Binds to pairs of hemimethylated GATC sequences in the oriC region, thus preventing assembly of replication proteins and re-initiation at newly replicated origins. Repression is relieved when the region becomes fully methylated. The protein is Negative modulator of initiation of replication of Vibrio atlanticus (strain LGP32) (Vibrio splendidus (strain Mel32)).